The sequence spans 1351 residues: DNA-directed RNA polymerase subunit beta' (1351 aa).

The Zn(2+) site is built by Cys70, Cys72, Cys85, and Cys88. Mg(2+)-binding residues include Asp460, Asp462, and Asp464. Zn(2+) is bound by residues Cys801, Cys875, Cys882, and Cys885.

The protein belongs to the RNA polymerase beta' chain family. In terms of assembly, the RNAP catalytic core consists of 2 alpha, 1 beta, 1 beta' and 1 omega subunit. When a sigma factor is associated with the core the holoenzyme is formed, which can initiate transcription. Mg(2+) is required as a cofactor. The cofactor is Zn(2+).

It catalyses the reaction RNA(n) + a ribonucleoside 5'-triphosphate = RNA(n+1) + diphosphate. Functionally, DNA-dependent RNA polymerase catalyzes the transcription of DNA into RNA using the four ribonucleoside triphosphates as substrates. In Syntrophobacter fumaroxidans (strain DSM 10017 / MPOB), this protein is DNA-directed RNA polymerase subunit beta'.